The primary structure comprises 714 residues: K(+)-insensitive pyrophosphate-energized proton pump (714 aa).

A signal peptide spans 1 to 20 (MRMTVIPIVILCGVLSVVYA). A run of 4 helical transmembrane segments spans residues 52–74 (LTRQ…WYLL), 85–105 (GAVL…RANL), 128–148 (ITGM…YFVL), and 166–186 (VSLG…GGIF). K188 lines the substrate pocket. 4 residues coordinate Mg(2+): D191, D195, N218, and D221. 6 helical membrane-spanning segments follow: residues 238–258 (AVSV…TPIL), 263–283 (VYPL…TFFV), 298–318 (GLIA…YATV), 333–353 (GTNL…IVVI), 383–403 (GLAV…GGII), and 411–431 (LFGT…IVAL). D439 contacts Mg(2+). 4 consecutive transmembrane segments (helical) span residues 470–490 (AVTK…LFAA), 522–542 (YVVA…GIAM), 591–611 (VIPS…VLLI), and 618–638 (AFAA…FVAI). Ca(2+) is bound by residues D648, D680, and D684. Residue K687 participates in substrate binding. The chain crosses the membrane as a helical span at residues 693 to 713 (AVNPAIKITNIVALLLLAVLA).

The protein belongs to the H(+)-translocating pyrophosphatase (TC 3.A.10) family. K(+)-insensitive subfamily. In terms of assembly, homodimer. It depends on Mg(2+) as a cofactor.

Its subcellular location is the acidocalcisome membrane. The enzyme catalyses diphosphate + H2O + H(+)(in) = 2 phosphate + 2 H(+)(out). Its function is as follows. Proton pump that utilizes the energy of pyrophosphate hydrolysis as the driving force for proton movement across the membrane. Generates a proton motive force. The protein is K(+)-insensitive pyrophosphate-energized proton pump of Agrobacterium fabrum (strain C58 / ATCC 33970) (Agrobacterium tumefaciens (strain C58)).